The chain runs to 235 residues: Adenosine 5'-phosphosulfate reductase (235 aa).

[4Fe-4S] cluster contacts are provided by Cys-121, Cys-122, Cys-204, and Cys-207. The Nucleophile; cysteine thiosulfonate intermediate role is filled by Cys-230.

It belongs to the PAPS reductase family. CysH subfamily. [4Fe-4S] cluster is required as a cofactor.

It is found in the cytoplasm. It catalyses the reaction [thioredoxin]-disulfide + sulfite + AMP + 2 H(+) = adenosine 5'-phosphosulfate + [thioredoxin]-dithiol. The protein operates within sulfur metabolism; hydrogen sulfide biosynthesis; sulfite from sulfate. Catalyzes the formation of sulfite from adenosine 5'-phosphosulfate (APS) using thioredoxin as an electron donor. The sequence is that of Adenosine 5'-phosphosulfate reductase from Geobacillus thermodenitrificans (strain NG80-2).